A 266-amino-acid chain; its full sequence is Large ribosomal subunit protein uL4 (266 aa).

The protein belongs to the universal ribosomal protein uL4 family. As to quaternary structure, part of the 50S ribosomal subunit.

In terms of biological role, one of the primary rRNA binding proteins, this protein initially binds near the 5'-end of the 23S rRNA. It is important during the early stages of 50S assembly. It makes multiple contacts with different domains of the 23S rRNA in the assembled 50S subunit and ribosome. Functionally, forms part of the polypeptide exit tunnel. This chain is Large ribosomal subunit protein uL4, found in Sulfolobus acidocaldarius (strain ATCC 33909 / DSM 639 / JCM 8929 / NBRC 15157 / NCIMB 11770).